The following is a 285-amino-acid chain: (2Z,6Z)-farnesyl diphosphate synthase CPT6, chloroplastic (285 aa).

Residues 1–30 (MNSLFVGRPIVKSSYNVYTLPSSICGGHFF) constitute a chloroplast transit peptide. The active site involves D65.

The protein belongs to the UPP synthase family. Mg(2+) serves as cofactor. As to expression, expressed in roots and red fruits.

It is found in the plastid. The protein resides in the chloroplast. It catalyses the reaction 2 isopentenyl diphosphate + dimethylallyl diphosphate = (2Z,6Z)-farnesyl diphosphate + 2 diphosphate. The enzyme catalyses isopentenyl diphosphate + dimethylallyl diphosphate = neryl diphosphate + diphosphate. It carries out the reaction neryl diphosphate + isopentenyl diphosphate = (2Z,6Z)-farnesyl diphosphate + diphosphate. In terms of biological role, uses neryl diphosphate to catalyze the cis-prenyl chain elongation and produce the 15 carbon product (2Z,6Z)-farnesyl diphosphate. The polypeptide is (2Z,6Z)-farnesyl diphosphate synthase CPT6, chloroplastic (Solanum lycopersicum (Tomato)).